Consider the following 346-residue polypeptide: Peripherin-2 (346 aa).

The Cytoplasmic portion of the chain corresponds to 1–18; that stretch reads MALLKVKFDQKKRVKLAQ. The chain crosses the membrane as a helical span at residues 19-41; the sequence is GLWLMNWFSVLAGIIIFGLGLFL. Residues 42–62 are Lumenal-facing; the sequence is KIELRKRSDVMNNSESHFVPN. A glycan (N-linked (GlcNAc...) asparagine) is linked at Asn-53. Residues 63 to 79 traverse the membrane as a helical segment; the sequence is SLIGVGVLSCVFNSLAG. At 80–101 the chain is on the cytoplasmic side; it reads KICYDALDPAKYAKWKPWLKPY. Residues 102-122 form a helical membrane-spanning segment; sequence LAVCVLFNVVLFLVALCCFLL. At 123–264 the chain is on the lumenal side; sequence RGSLESTLAH…LSYYSNLMNT (142 aa). Asn-229 and Asn-263 each carry an N-linked (GlcNAc...) asparagine glycan. A helical transmembrane segment spans residues 265–283; that stretch reads TGAVTLLVWLFEVTITVGL. Residues 284–346 lie on the Cytoplasmic side of the membrane; it reads RYLHTALEGM…EDAGQAPAAG (63 aa). The tract at residues 341–346 is interaction with MREG; that stretch reads QAPAAG.

The protein belongs to the PRPH2/ROM1 family. Homodimer; disulfide-linked. Forms a homotetramer. Forms a heterotetramer with ROM1. Homotetramer and heterotetramer core complexes go on to form higher order complexes by formation of intermolecular disulfide bonds. Interacts with MREG. Interacts with STX3. Interacts with SNAP25. In terms of tissue distribution, retina (photoreceptor). In rim region of ROS (rod outer segment) disks.

It localises to the membrane. Its subcellular location is the cell projection. It is found in the cilium. The protein resides in the photoreceptor outer segment. The protein localises to the photoreceptor inner segment. In terms of biological role, essential for retina photoreceptor outer segment disk morphogenesis, may also play a role with ROM1 in the maintenance of outer segment disk structure. Required for the maintenance of retinal outer nuclear layer thickness. Required for the correct development and organization of the photoreceptor inner segment. This is Peripherin-2 (PRPH2) from Bos taurus (Bovine).